The primary structure comprises 299 residues: Cold shock protein 1 (299 aa).

A2 bears the N-acetylalanine mark. In terms of domain architecture, CSD spans T12–A76. The interval A76 to G97 is disordered. CCHC-type zinc fingers lie at residues S100–I117, E132–S149, D164–Q181, D198–Q215, G230–T247, R253–Q270, and N280–S297.

Belongs to the cold shock protein (CSP) family. As to expression, mostly expressed in shoot apices and siliques, and, to a lower extent, in roots, cotyledons, stems, shoots, leaves, floral buds and flowers.

It is found in the nucleus. The protein resides in the cytoplasm. In terms of biological role, chaperone that binds to RNA, single- (ssDNA) and double-stranded (dsDNA) DNA, and unwinds nucleic acid duplex. Exhibits a DNA melting activity. May be involved in cold resistance. Prevents seed germination under dehydration or salt stress conditions. The chain is Cold shock protein 1 (CSP1) from Arabidopsis thaliana (Mouse-ear cress).